We begin with the raw amino-acid sequence, 724 residues long: Disks large homolog 4 (724 aa).

Residues Cys-3 and Cys-5 are each lipidated (S-palmitoyl cysteine). The segment at 15-35 is disordered; that stretch reads QDEDTPPLEHSPAHLPNQANS. PDZ domains lie at 65–151 and 160–246; these read EITL…VMRR and EIKL…VAKP. Residues Ser-73 and Ser-142 each carry the phosphoserine modification. Tyr-240 carries the post-translational modification Phosphotyrosine. Ser-295 carries the phosphoserine modification. Residues 313–393 enclose the PDZ 3 domain; sequence RIVIHRGSTG…QTVTIIAQYK (81 aa). A phosphoserine mark is found at Ser-415 and Ser-418. A Phosphothreonine modification is found at Thr-420. Phosphoserine occurs at positions 422, 425, 449, and 480. The region spanning 428-498 is the SH3 domain; it reads KRGFYIRALF…PSKRRVERRE (71 aa). Residues 534 to 709 enclose the Guanylate kinase-like domain; the sequence is ARPIIILGPT…IYHKVKRVIE (176 aa). Tyr-580 carries the post-translational modification Phosphotyrosine. Phosphoserine occurs at positions 606 and 654. Tyr-715 carries the phosphotyrosine modification.

This sequence belongs to the MAGUK family. In terms of assembly, interacts through its PDZ domains with ANO2 and NETO1. Interacts with KCNJ4. Interacts through its first two PDZ domains with GRIN2A, GRIN2B, GRIN2C and GRIN2D. Interacts with ERBB4. Interacts with KCNA1, KCNA2, KCNA3 and KCNA4. Interacts with LRRC4 and LRRC4B. Interacts with SYNGAP1. Interacts with ASIC3. Interacts with SEMA4C. Interacts with CXADR. Interacts with KCND2. Interacts (via first PDZ domain) with CRIPT. Interacts through its first PDZ domain with GRIK2 and KCNA4. Interacts through its second PDZ domain with the PDZ domain of NOS1 or the C-terminus of CAPON. Interacts through its third PDZ domain with NLGN1 and CRIPT, and probably with NLGN2 and NLGN3. Interacts through its guanylate kinase-like domain with DLGAP1/GKAP, DLGAP2, DLGAP3, DLGAP4, MAP1A, BEGAIN and SIPA1L1. Interacts through its guanylate kinase-like domain with KIF13B. Isoform 2 interacts through an L27 domain with HGS/HRS and the first L27 domain of CASK. Interacts with ANKS1B. Interacts with ADR1B. May interact with HTR2A. Interacts with ADAM22, KLHL17 and LGI1. Interacts with FRMPD4 (via C-terminus). Interacts with LRFN1 and LRFN2. Interacts with LRFN4. Interacts (via N-terminal tandem pair of PDZ domains) with GPER1 (via C-terminus tail motif); the interaction is direct and induces the increase of GPER1 protein levels residing at the plasma membrane surface in a estradiol-independent manner. Interacts (via N-terminus tandem pair of PDZ domains) with NOS1 (via N-terminal domain). Interacts with SHANK3. Interacts with GPR85. Interacts with CACNG2 and MPP2 (via the SH3-Guanylate kinase-like sub-module). Interacts with ADGRB1. Found in a complex with PRR7 and GRIN1. Interacts (via PDZ3 domain and to lesser degree via PDZ2 domain) with PRR7. Component of the postsynaptic hippocampal AMPA-type glutamate receptor (AMPAR) complex, at least composed of pore forming AMPAR subunits GRIA1, GRIA2 and GRIA3 and AMPAR auxiliary proteins SHISA6 and SHISA7. Interacts (via its first two PDZ domains) with SHISA6 and SHISA7 (via PDZ-binding motif); the interaction is direct. Interacts (via PDZ domain 2) with SEMA4F (via PDZ-binding motif); this interaction may promote translocation of DLG4/SAP90 to the membrane. Interacts with RPH3A and GRIN2A; this ternary complex regulates NMDA receptor composition at postsynaptic membranes. Interacts with ABR and BCR. Interacts with DGKI (via PDZ-binding motif); controls the localization of DGKI to the synapse. Interacts with C9orf72, SMCR8 and RAB39B. Interacts with ZDHHC5. Interacts with PTEN (via PDZ domain-binding motif); the interaction is induced by NMDA and is required for PTEN location at postsynaptic density. Found in a complex with GRIA1, GRIA2, GRIA3, GRIA4, CACNG8 and CNIH2. Interacts with FAM81A; the interaction facilitates condensate formation via liquid-liquid phase separation. Interacts with ADGRL3. Interacts with SORCS3. Post-translationally, palmitoylated. Palmitoylation is required for targeting to postsynaptic density, plasma membrane and synapses. Palmitoylation by ZDHHC2 occurs when the synaptic activity decreases and induces DLG4 synaptic clustering. Palmitoylation by ZDHHC15 regulates trafficking to the postsynaptic density and function in synaptogenesis. Palmitoylation may play a role in glutamate receptor GRIA1 synapse clustering. Depalmitoylated by ABHD17A and ABHD17B and to a lesser extent by ABHD17C, ABHD12, ABHD13, LYPLA1 and LYPLA2. Undergoes rapid synaptic palmitoylation/depalmitoylation cycle during neuronal development which slows down in mature neurons. In terms of processing, ubiquitinated by MDM2 in response to NMDA receptor activation, leading to proteasome-mediated degradation of DLG4 which is required for AMPA receptor endocytosis. Expressed in brain (at protein level). Detected in juxtaparanodal zones in the central nervous system and at nerve terminal plexuses of basket cells in the cerebellum. Expressed in cerebrum. Expressed in hippocampal neurons (at protein level). Isoform 1 and isoform 2: highly expressed in cerebellum, cortex, hippocampus, and corpus striatum.

The protein resides in the cell membrane. It localises to the postsynaptic density. The protein localises to the synapse. Its subcellular location is the cytoplasm. It is found in the cell projection. The protein resides in the axon. It localises to the dendritic spine. The protein localises to the dendrite. Its subcellular location is the presynapse. Functionally, postsynaptic scaffolding protein that plays a critical role in synaptogenesis and synaptic plasticity by providing a platform for the postsynaptic clustering of crucial synaptic proteins. Interacts with the cytoplasmic tail of NMDA receptor subunits and shaker-type potassium channels. Required for synaptic plasticity associated with NMDA receptor signaling. Overexpression or depletion of DLG4 changes the ratio of excitatory to inhibitory synapses in hippocampal neurons. May reduce the amplitude of ASIC3 acid-evoked currents by retaining the channel intracellularly. May regulate the intracellular trafficking of ADR1B. Also regulates AMPA-type glutamate receptor (AMPAR) immobilization at postsynaptic density keeping the channels in an activated state in the presence of glutamate and preventing synaptic depression. Under basal conditions, cooperates with FYN to stabilize palmitoyltransferase ZDHHC5 at the synaptic membrane through FYN-mediated phosphorylation of ZDHHC5 and its subsequent inhibition of association with endocytic proteins. The sequence is that of Disks large homolog 4 from Rattus norvegicus (Rat).